A 283-amino-acid polypeptide reads, in one-letter code: Heavy metal-associated isoprenylated plant protein 3 (283 aa).

Over residues 1-22 (MGEKKNEGDNKKKGGDNKKKNE) the composition is skewed to basic and acidic residues. A disordered region spans residues 1–26 (MGEKKNEGDNKKKGGDNKKKNETPSI). HMA domains are found at residues 25–88 (SITV…KKKV) and 132–195 (VTTA…KRAV). Zn(2+) contacts are provided by Cys36 and Cys39. A compositionally biased stretch (basic and acidic residues) spans 82–129 (EKTKKKVDLVSPQPKKEKEKENKNKNDEDKKKSEEKKKPDNNDKKPKE). The segment at 82-131 (EKTKKKVDLVSPQPKKEKEKENKNKNDEDKKKSEEKKKPDNNDKKPKETP) is disordered. Residues Cys143 and Cys146 each contribute to the Zn(2+) site. Residues 198-230 (VPPKKEKDKENGNENGEKKKGGGGDGGGKEKTG) are compositionally biased toward basic and acidic residues. Residues 198 to 238 (VPPKKEKDKENGNENGEKKKGGGGDGGGKEKTGNKGGGEGV) are disordered. Cys280 carries the post-translational modification Cysteine methyl ester. Cys280 is lipidated: S-farnesyl cysteine. The propeptide at 281-283 (VVM) is removed in mature form.

This sequence belongs to the HIPP family.

It localises to the nucleus. It is found in the nucleolus. Its subcellular location is the cytoplasm. Functionally, heavy-metal-binding protein. Binds high amounts of zinc. May act as an upstream regulator of the salicylate-dependent pathogen response. Involved in abiotic stress responses, and seed and flower development. In Arabidopsis thaliana (Mouse-ear cress), this protein is Heavy metal-associated isoprenylated plant protein 3.